A 326-amino-acid polypeptide reads, in one-letter code: Tetraacyldisaccharide 4'-kinase (326 aa).

52 to 59 provides a ligand contact to ATP; that stretch reads TLGGAGKT.

It belongs to the LpxK family.

It carries out the reaction a lipid A disaccharide + ATP = a lipid IVA + ADP + H(+). It participates in glycolipid biosynthesis; lipid IV(A) biosynthesis; lipid IV(A) from (3R)-3-hydroxytetradecanoyl-[acyl-carrier-protein] and UDP-N-acetyl-alpha-D-glucosamine: step 6/6. Transfers the gamma-phosphate of ATP to the 4'-position of a tetraacyldisaccharide 1-phosphate intermediate (termed DS-1-P) to form tetraacyldisaccharide 1,4'-bis-phosphate (lipid IVA). This is Tetraacyldisaccharide 4'-kinase from Methylobacterium radiotolerans (strain ATCC 27329 / DSM 1819 / JCM 2831 / NBRC 15690 / NCIMB 10815 / 0-1).